Consider the following 624-residue polypeptide: Ceramide transfer protein (624 aa).

Residues 1–11 (MSDNQSWNSSG) show a composition bias toward polar residues. The interval 1 to 24 (MSDNQSWNSSGSEEDPETESGPPV) is disordered. The PH domain maps to 23-117 (PVERCGVLSK…WIDAIEQHKT (95 aa)). Phosphoserine is present on serine 126. Position 132 is a phosphoserine; by PKD (serine 132). At serine 135 the chain carries Phosphoserine. Residues 263 to 303 (IELMVKREDSWQKRLDKETEKKRRTEEAYKNAMTELKKKSH) adopt a coiled-coil conformation. Serine 315 is subject to Phosphoserine. Positions 321-327 (EFFDAVE) match the FFAT motif. Tyrosine 372 is subject to Phosphotyrosine. Phosphoserine is present on residues serine 373, serine 377, and serine 380. Positions 389–618 (DVHRFSSQVE…FTSYVQEKTA (230 aa)) constitute an START domain. Glutamate 472, glutamine 493, asparagine 530, and tyrosine 579 together coordinate an N-acylsphing-4-enine.

In terms of assembly, interacts with VAPA and VAPB. Interaction with VAPB is less efficient than with VAPA. Interacts (via FFAT motif) with MOSPD2 (via MSP domain). Phosphorylation on Ser-132 decreases the affinity toward phosphatidylinositol 4-phosphate at Golgi membranes and reduces ceramide transfer activity. Inactivated by hyperphosphorylation of serine residues by CSNK1G2/CK1 that triggers dissociation from the Golgi complex, thus down-regulating ER-to-Golgi transport of ceramide and sphingomyelin synthesis. Widely expressed.

The protein localises to the cytoplasm. It localises to the golgi apparatus. The protein resides in the endoplasmic reticulum. It carries out the reaction N-hexadecanoylsphing-4-enine(in) = N-hexadecanoylsphing-4-enine(out). In terms of biological role, shelters ceramides and diacylglycerol lipids inside its START domain and mediates the intracellular trafficking of ceramides and diacylglycerol lipids in a non-vesicular manner. The sequence is that of Ceramide transfer protein from Homo sapiens (Human).